The primary structure comprises 651 residues: Mediator of RNA polymerase II transcription subunit 17 (651 aa).

The tract at residues 51–83 (QGSGSEEEEAAGAEGDAQDWAGAGSSADQDDEE) is disordered. The span at 62–74 (GAEGDAQDWAGAG) shows a compositional bias: low complexity.

The protein belongs to the Mediator complex subunit 17 family. Component of the Mediator complex, which is composed of MED1, MED4, MED6, MED7, MED8, MED9, MED10, MED11, MED12, MED13, MED13L, MED14, MED15, MED16, MED17, MED18, MED19, MED20, MED21, MED22, MED23, MED24, MED25, MED26, MED27, MED29, MED30, MED31, CCNC, CDK8 and CDC2L6/CDK11. The MED12, MED13, CCNC and CDK8 subunits form a distinct module termed the CDK8 module. Mediator containing the CDK8 module is less active than Mediator lacking this module in supporting transcriptional activation. Individual preparations of the Mediator complex lacking one or more distinct subunits have been variously termed ARC, CRSP, DRIP, PC2, SMCC and TRAP. Interacts with GATA1, PPARG and STAT2.

The protein resides in the nucleus. Functionally, component of the Mediator complex, a coactivator involved in the regulated transcription of nearly all RNA polymerase II-dependent genes. Mediator functions as a bridge to convey information from gene-specific regulatory proteins to the basal RNA polymerase II transcription machinery. Mediator is recruited to promoters by direct interactions with regulatory proteins and serves as a scaffold for the assembly of a functional preinitiation complex with RNA polymerase II and the general transcription factors. This chain is Mediator of RNA polymerase II transcription subunit 17 (MED17), found in Bos taurus (Bovine).